A 461-amino-acid polypeptide reads, in one-letter code: MNDNKAWSGRFAEPVAELVKTYTASVDFDRRMAEFDIQGSLAHAQMLTRAGVLSETDLDAIRSGMHTILEDIRAGRFEWSVDLEDVHMNVEKRLTDRIGDAGKRLHTGRSRNDQVATGIRLYLRDAIDRIVGFVRGLQAALLDLAEPNAATVMPGFTHLQVAQPVTFGHHLLAYVEMLGRDAERMQDCRKRVNRLPLGAAALAGTTYPIDRHYTAELLGFDDVCHNSLDAVSDRDFAIEFTAAASLVMTHLSRLSEELILWMSPRVGFIDIADRFCTGSSIMPQKKNPDVPELVRGKAGRVTGHLMALLMLMKAQPLAYNKDNQEDKEPLFDTVDTLIDTLRIYADMMRGITVRPEAMRAAVLQGFATATDLADYLVKKGVPFRDSHEIVARTVKLAEVQGCDIADLPLDELREFSELIEADVYDVLTPEGSLAQRNHVGGTAPEQVREQIARWRQRLAHA.

The protein belongs to the lyase 1 family. Argininosuccinate lyase subfamily.

Its subcellular location is the cytoplasm. The catalysed reaction is 2-(N(omega)-L-arginino)succinate = fumarate + L-arginine. Its pathway is amino-acid biosynthesis; L-arginine biosynthesis; L-arginine from L-ornithine and carbamoyl phosphate: step 3/3. The chain is Argininosuccinate lyase from Laribacter hongkongensis (strain HLHK9).